We begin with the raw amino-acid sequence, 317 residues long: Mitochondrial thiamine pyrophosphate carrier 1 (317 aa).

3 Solcar repeats span residues 12 to 110, 120 to 206, and 214 to 309; these read GTRR…TTQV, PPAL…LRPV, and PFGS…SLKL. Helical transmembrane passes span 17 to 35, 91 to 107, 126 to 146, 181 to 198, 220 to 240, and 284 to 301; these read VVLS…VAPL, LMYV…YRTT, FVSG…LDLL, GCSA…LFFA, AAAG…LDLV, and GLTV…ITMW.

It belongs to the mitochondrial carrier (TC 2.A.29) family.

It is found in the mitochondrion inner membrane. In terms of biological role, mitochondrial transporter that mediates uptake of thiamine pyrophosphate (ThPP) into mitochondria. The chain is Mitochondrial thiamine pyrophosphate carrier 1 (tpc1) from Neosartorya fischeri (strain ATCC 1020 / DSM 3700 / CBS 544.65 / FGSC A1164 / JCM 1740 / NRRL 181 / WB 181) (Aspergillus fischerianus).